We begin with the raw amino-acid sequence, 36 residues long: Photosystem I reaction center subunit VIII (36 aa).

A helical membrane pass occupies residues 1-21 (MITFSFPSIFVPLVGLVFPAI).

Belongs to the PsaI family.

It is found in the plastid. The protein localises to the chloroplast thylakoid membrane. Its function is as follows. May help in the organization of the PsaL subunit. The polypeptide is Photosystem I reaction center subunit VIII (Coffea arabica (Arabian coffee)).